We begin with the raw amino-acid sequence, 795 residues long: Phenylalanine--tRNA ligase beta subunit (795 aa).

Positions 39 to 148 (KSEFHGVVVG…KETLVGINVY (110 aa)) constitute a tRNA-binding domain. The B5 domain maps to 400 to 475 (HKNNTIRLHH…RIYEYNNVHL (76 aa)). Mg(2+)-binding residues include aspartate 453, aspartate 459, and aspartate 463. Positions 701–794 (SKFPTVRRDI…LQKKFQAVLR (94 aa)) constitute an FDX-ACB domain.

It belongs to the phenylalanyl-tRNA synthetase beta subunit family. Type 1 subfamily. As to quaternary structure, tetramer of two alpha and two beta subunits. Requires Mg(2+) as cofactor.

It is found in the cytoplasm. The enzyme catalyses tRNA(Phe) + L-phenylalanine + ATP = L-phenylalanyl-tRNA(Phe) + AMP + diphosphate + H(+). The protein is Phenylalanine--tRNA ligase beta subunit (pheT) of Buchnera aphidicola subsp. Acyrthosiphon pisum (strain APS) (Acyrthosiphon pisum symbiotic bacterium).